Consider the following 233-residue polypeptide: uncharacterized protein (233 aa).

Disordered regions lie at residues 1–159 and 181–206; these read MGKH…NEKL and MGVKNAPKPTDDSSRLSDEKNRQDKM. A compositionally biased stretch (basic and acidic residues) spans 36–115; that stretch reads RDRSRSPHKE…RRDDKNRLSA (80 aa). Low complexity predominate over residues 135 to 148; it reads SSSSNTTDTASSSS. Positions 189 to 206 are enriched in basic and acidic residues; the sequence is PTDDSSRLSDEKNRQDKM.

This is an uncharacterized protein from Caenorhabditis elegans.